The following is a 272-amino-acid chain: Shikimate dehydrogenase (NADP(+)) (272 aa).

Residues 16–18 (SLS) and Thr-63 contribute to the shikimate site. Catalysis depends on Lys-67, which acts as the Proton acceptor. Glu-79 provides a ligand contact to NADP(+). The shikimate site is built by Asn-88 and Asp-103. Residues 127 to 131 (GAGGA), 151 to 156 (NRTMSR), and Ile-212 each bind NADP(+). Shikimate is bound at residue Tyr-214. Gly-235 lines the NADP(+) pocket.

The protein belongs to the shikimate dehydrogenase family. Homodimer.

It carries out the reaction shikimate + NADP(+) = 3-dehydroshikimate + NADPH + H(+). Its pathway is metabolic intermediate biosynthesis; chorismate biosynthesis; chorismate from D-erythrose 4-phosphate and phosphoenolpyruvate: step 4/7. Its function is as follows. Involved in the biosynthesis of the chorismate, which leads to the biosynthesis of aromatic amino acids. Catalyzes the reversible NADPH linked reduction of 3-dehydroshikimate (DHSA) to yield shikimate (SA). This is Shikimate dehydrogenase (NADP(+)) from Staphylococcus epidermidis (strain ATCC 12228 / FDA PCI 1200).